The following is a 226-amino-acid chain: Lipoprotein-releasing system ATP-binding protein LolD (226 aa).

The 222-residue stretch at 5–226 (LRCEKISKFY…MADGVLREAS (222 aa)) folds into the ABC transporter domain. ATP is bound at residue 41-48 (GSSGSGKS).

The protein belongs to the ABC transporter superfamily. Lipoprotein translocase (TC 3.A.1.125) family. As to quaternary structure, the complex is composed of two ATP-binding proteins (LolD) and two transmembrane proteins (LolC and LolE).

The protein resides in the cell inner membrane. In terms of biological role, part of the ABC transporter complex LolCDE involved in the translocation of mature outer membrane-directed lipoproteins, from the inner membrane to the periplasmic chaperone, LolA. Responsible for the formation of the LolA-lipoprotein complex in an ATP-dependent manner. This chain is Lipoprotein-releasing system ATP-binding protein LolD, found in Haemophilus ducreyi (strain 35000HP / ATCC 700724).